Here is a 578-residue protein sequence, read N- to C-terminus: Proteasome-associated ATPase (578 aa).

The stretch at 8–84 (TAAELRNQVR…LKEEVDRLAQ (77 aa)) forms a coiled coil. 267–272 (GCGKTL) is a binding site for ATP. Residues 577–578 (YL) are docks into pockets in the proteasome alpha-ring.

This sequence belongs to the AAA ATPase family. In terms of assembly, homohexamer. Assembles into a hexameric ring structure that caps the 20S proteasome core. Strongly interacts with the prokaryotic ubiquitin-like protein Pup through a hydrophobic interface; the interacting region of ARC lies in its N-terminal coiled-coil domain. There is one Pup binding site per ARC hexamer ring. Upon ATP-binding, the C-terminus of ARC interacts with the alpha-rings of the proteasome core, possibly by binding to the intersubunit pockets.

The protein operates within protein degradation; proteasomal Pup-dependent pathway. Its function is as follows. ATPase which is responsible for recognizing, binding, unfolding and translocation of pupylated proteins into the bacterial 20S proteasome core particle. May be essential for opening the gate of the 20S proteasome via an interaction with its C-terminus, thereby allowing substrate entry and access to the site of proteolysis. Thus, the C-termini of the proteasomal ATPase may function like a 'key in a lock' to induce gate opening and therefore regulate proteolysis. The polypeptide is Proteasome-associated ATPase (Kribbella flavida (strain DSM 17836 / JCM 10339 / NBRC 14399)).